We begin with the raw amino-acid sequence, 448 residues long: MREIVHLQTGQCGNQIGAAFWQTISGEHGLDSNGVYNGTSELQLERMSVYFNEASGNKYVPRAVLVDLEPGTMDAVRAGPFGQLFRPDNFVFGQSGAGNNWAKGHYTEGAELVDQVLDVVRREAEGCDCLQGFQITHSLGGGTGAGMGTLLISKIREEFPDRMMATFSVVPSPKVSDTVVEPYNATLSVHQLVENSDETFCIDNEALYDICMRTLKLSNPSYGDLNYLVSAVMSGVTTCLRFPGQLNSDLRKLAVNMVPFPRLHFFMVGFAPLTSRGAHSFRAVSVPELTQQMFDPKNMMAASDFRNGRYLTCSAIFRGKVAMKEVEDQMRNVQNKNSSYFVEWIPNNIQTALCAIPPRDLKMSSTFIGNSTSIQELFKRVGEQFTAMFRRKAFLHWYTGEGMDEMEFTEAESNMNDLVSEYQQYQDAGIDEEEEEYEEEAPVDEPLE.

GTP is bound by residues Gln11, Glu69, Ser138, Gly142, Thr143, Gly144, Asn204, and Asn226. Mg(2+) is bound at residue Glu69. Residues Gln426–Glu448 form a disordered region. The segment covering Gly429 to Glu448 has biased composition (acidic residues).

It belongs to the tubulin family. In terms of assembly, dimer of alpha and beta chains. A typical microtubule is a hollow water-filled tube with an outer diameter of 25 nm and an inner diameter of 15 nM. Alpha-beta heterodimers associate head-to-tail to form protofilaments running lengthwise along the microtubule wall with the beta-tubulin subunit facing the microtubule plus end conferring a structural polarity. Microtubules usually have 13 protofilaments but different protofilament numbers can be found in some organisms and specialized cells. The cofactor is Mg(2+).

The protein resides in the cytoplasm. It is found in the cytoskeleton. Its function is as follows. Tubulin is the major constituent of microtubules, a cylinder consisting of laterally associated linear protofilaments composed of alpha- and beta-tubulin heterodimers. Microtubules grow by the addition of GTP-tubulin dimers to the microtubule end, where a stabilizing cap forms. Below the cap, tubulin dimers are in GDP-bound state, owing to GTPase activity of alpha-tubulin. This chain is Tubulin beta chain (TUB2), found in Epichloe coenophiala (Tall fescue endophyte fungus).